We begin with the raw amino-acid sequence, 225 residues long: ATP synthase subunit a (225 aa).

6 consecutive transmembrane segments (helical) span residues 18–38 (LSLNWTSTFLGLLLIPSMFWL), 73–93 (ILISIFIMMLFNNFMGLFPYI), 100–120 (MTLTFSIALPMWMSFMLFGWI), 126–146 (MFTHLVPQGTPNALMSFMVLI), 156–176 (GTLAVRLAANMIAGHLLLTLL), and 187–207 (IMLFLIIGQMLLLILESAVAM).

It belongs to the ATPase A chain family. F-type ATPases have 2 components, CF(1) - the catalytic core - and CF(0) - the membrane proton channel. CF(1) has five subunits: alpha(3), beta(3), gamma(1), delta(1), epsilon(1). CF(0) has three main subunits: a, b and c.

The protein localises to the mitochondrion inner membrane. Functionally, mitochondrial membrane ATP synthase (F(1)F(0) ATP synthase or Complex V) produces ATP from ADP in the presence of a proton gradient across the membrane which is generated by electron transport complexes of the respiratory chain. F-type ATPases consist of two structural domains, F(1) - containing the extramembraneous catalytic core and F(0) - containing the membrane proton channel, linked together by a central stalk and a peripheral stalk. During catalysis, ATP synthesis in the catalytic domain of F(1) is coupled via a rotary mechanism of the central stalk subunits to proton translocation. Key component of the proton channel; it may play a direct role in the translocation of protons across the membrane. The protein is ATP synthase subunit a (ATP6) of Locusta migratoria (Migratory locust).